Reading from the N-terminus, the 350-residue chain is Ribonuclease H2 subunit B (350 aa).

Over residues 134–151 (QDYSNSSDTGENQKSNSK) the composition is skewed to polar residues. The disordered stretch occupies residues 134–153 (QDYSNSSDTGENQKSNSKTN).

The protein belongs to the RNase H2 subunit B family. Highly divergent. The RNase 2 complex is a heterotrimer composed of the catalytic subunit RNH201 and of the non-catalytic subunits RNH202 and RNH203.

The protein resides in the nucleus. Its function is as follows. Non catalytic subunit of RNase H2, an endonuclease that specifically degrades the RNA of RNA:DNA hybrids. Participates in DNA replication, possibly by mediating the removal of lagging-strand Okazaki fragment RNA primers during DNA replication. Mediates the excision of single ribonucleotides from DNA:RNA duplexes. The sequence is that of Ribonuclease H2 subunit B (RNH202) from Saccharomyces cerevisiae (strain ATCC 204508 / S288c) (Baker's yeast).